Here is a 470-residue protein sequence, read N- to C-terminus: Nuclear receptor subfamily 0 group B member 1 (470 aa).

3 repeat units span residues 1 to 67 (MAGE…YRCC), 68 to 133 (FCGK…YRCC), and 134 to 200 (FCGE…YRCC). Residues 1–253 (MAGENHQWQG…RPVALKNPQV (253 aa)) form a 4 X 67 AA tandem repeats region. 3 consecutive short sequence motifs (LXXLL motif) follow at residues 13–17 (LYNML), 80–84 (LYSML), and 146–150 (LYSLL). A 4; truncated repeat occupies 201-253 (FCGEDHPQQGSTLYCMPTSTNQAQAAPEERPRAPWWDTSSGALRPVALKNPQV). The 265-residue stretch at 205 to 469 (DHPQQGSTLY…DMMLEMLCTK (265 aa)) folds into the NR LBD domain. Residues 461-466 (MMLEML) carry the AF-2 motif motif.

It belongs to the nuclear hormone receptor family. NR0 subfamily. As to quaternary structure, homodimer. Interacts with NR5A1, NR5A2, NR0B2 and with COPS2. Interacts with ESRRB; represses ESRRB activity at the GATA6 promoter.

The protein resides in the nucleus. The protein localises to the cytoplasm. In terms of biological role, nuclear receptor that lacks a DNA-binding domain and acts as a corepressor that inhibits the transcriptional activity of other nuclear receptors through heterodimeric interactions. Component of a cascade required for the development of the hypothalamic-pituitary-adrenal-gonadal axis. May also have a role in the development of the embryo and in the maintenance of embryonic stem cell pluripotency. The polypeptide is Nuclear receptor subfamily 0 group B member 1 (NR0B1) (Macaca mulatta (Rhesus macaque)).